Here is a 311-residue protein sequence, read N- to C-terminus: Acetyl-coenzyme A carboxylase carboxyl transferase subunit alpha (311 aa).

The CoA carboxyltransferase C-terminal domain maps to 36–286; that stretch reads NLEKETQKVY…SDYVLKAIEE (251 aa).

The protein belongs to the AccA family. In terms of assembly, acetyl-CoA carboxylase is a heterohexamer composed of biotin carboxyl carrier protein (AccB), biotin carboxylase (AccC) and two subunits each of ACCase subunit alpha (AccA) and ACCase subunit beta (AccD).

Its subcellular location is the cytoplasm. The catalysed reaction is N(6)-carboxybiotinyl-L-lysyl-[protein] + acetyl-CoA = N(6)-biotinyl-L-lysyl-[protein] + malonyl-CoA. It participates in lipid metabolism; malonyl-CoA biosynthesis; malonyl-CoA from acetyl-CoA: step 1/1. Functionally, component of the acetyl coenzyme A carboxylase (ACC) complex. First, biotin carboxylase catalyzes the carboxylation of biotin on its carrier protein (BCCP) and then the CO(2) group is transferred by the carboxyltransferase to acetyl-CoA to form malonyl-CoA. This is Acetyl-coenzyme A carboxylase carboxyl transferase subunit alpha from Campylobacter lari (strain RM2100 / D67 / ATCC BAA-1060).